A 152-amino-acid chain; its full sequence is Toxin Res (152 aa).

Belongs to the MbcT/ParT/Res family. Homodimer. Forms a complex with cognate antitoxin Xre.

Functionally, toxic component of a type II toxin-antitoxin (TA) system. Expression in E.coli inhibits cell growth; bacteriostasis is neutralized by expression of cognate antitoxin Xre. Probably depletes intracellular NAD(+). The protein is Toxin Res of Yersinia enterocolitica serotype O:8 / biotype 1B (strain NCTC 13174 / 8081).